Consider the following 479-residue polypeptide: MNYLNENIDSLNKKLASGELSADKLAKDTVANIKETDKKLNAWITVLDDAKPAENLDYSKSKLAGIPIAIKDNIITNGVKTTAASHMLYNYMPMYDATVISKLKKAGATFVGKTNMDEFAMGSSTEHSYYGATHNPWNLDKVPGGSSGGSAAAVAGGQVVAALGSDTGGSIRQPAAFNGIFGIKPTYGRVSRWGLIAFGSSLDQIGVMTKRVKDSAEVLNVIAGGDEHDSTVSVREVPDFTKFIGQDVKGLRVAVPKEYMDAVSGEMREVIQKQIDTLKDAGAIINEVSLPHTKYAVPDYYIIASSEASSNLQRYDGIRYGYRAKDTKNLLDVYVKSRSEGFGTEIKRRIMLGSFALSAGSYDRFFRQAAKVRTLICDDFDKIFAENDVIVGPTTTEPAFGIGEEVSDPIKMYNNDILTISANLAGIPAASVPAGLVDGMPVGLQIMAKRFDEGSIFKTADFIERTNKFYEKTPTGMED.

Catalysis depends on charge relay system residues Lys71 and Ser146. Residue Ser170 is the Acyl-ester intermediate of the active site.

This sequence belongs to the amidase family. GatA subfamily. As to quaternary structure, heterotrimer of A, B and C subunits.

It catalyses the reaction L-glutamyl-tRNA(Gln) + L-glutamine + ATP + H2O = L-glutaminyl-tRNA(Gln) + L-glutamate + ADP + phosphate + H(+). Allows the formation of correctly charged Gln-tRNA(Gln) through the transamidation of misacylated Glu-tRNA(Gln) in organisms which lack glutaminyl-tRNA synthetase. The reaction takes place in the presence of glutamine and ATP through an activated gamma-phospho-Glu-tRNA(Gln). This is Glutamyl-tRNA(Gln) amidotransferase subunit A from Lactobacillus acidophilus (strain ATCC 700396 / NCK56 / N2 / NCFM).